Consider the following 1239-residue polypeptide: Erythroid differentiation-related factor 1 (1239 aa).

Disordered stretches follow at residues 1–39 (MGDP…QGSA), 219–269 (AQPV…REPL), 517–559 (PKKE…DPAD), and 620–646 (KKES…TRGG). 2 stretches are compositionally biased toward low complexity: residues 9–28 (AEAS…LSQA) and 253–263 (SSVSEDPSASS). Positions 530-547 (NSDESYSEEEEEMADSDE) are enriched in acidic residues. TPR repeat units lie at residues 693 to 726 (SKAY…HDTY) and 914 to 953 (AQAH…LGTR).

The protein localises to the nucleus. Transcription factor involved in erythroid differentiation. Involved in transcriptional activation of the globin gene. In Mus musculus (Mouse), this protein is Erythroid differentiation-related factor 1 (Edrf1).